Reading from the N-terminus, the 350-residue chain is C4-dicarboxylate-binding protein DctB (350 aa).

An N-terminal signal peptide occupies residues Met1–Ala18.

It belongs to the bacterial solute-binding protein 7 family.

It localises to the secreted. Functionally, part of the binding-protein-dependent transport system for uptake of C4-dicarboxylates. Responsible for growth on fumarate and succinate but not malate. Is not directly involved in C4-dicarboxylate uptake, but plays a sensory role in the DctS/DctR two-component system which regulates the expression of the dctA C4-dicarboxylate transporter. In Bacillus subtilis (strain 168), this protein is C4-dicarboxylate-binding protein DctB (dctB).